We begin with the raw amino-acid sequence, 205 residues long: Peptidyl-tRNA hydrolase (205 aa).

TRNA is bound at residue Tyr14. His19 acts as the Proton acceptor in catalysis. Tyr68, Asn70, and Asn116 together coordinate tRNA.

The protein belongs to the PTH family. As to quaternary structure, monomer.

The protein resides in the cytoplasm. It catalyses the reaction an N-acyl-L-alpha-aminoacyl-tRNA + H2O = an N-acyl-L-amino acid + a tRNA + H(+). Functionally, hydrolyzes ribosome-free peptidyl-tRNAs (with 1 or more amino acids incorporated), which drop off the ribosome during protein synthesis, or as a result of ribosome stalling. Its function is as follows. Catalyzes the release of premature peptidyl moieties from peptidyl-tRNA molecules trapped in stalled 50S ribosomal subunits, and thus maintains levels of free tRNAs and 50S ribosomes. The chain is Peptidyl-tRNA hydrolase from Caulobacter vibrioides (strain ATCC 19089 / CIP 103742 / CB 15) (Caulobacter crescentus).